The primary structure comprises 105 residues: Anti-sigma factor RsrA (105 aa).

Positions 11, 37, 41, and 44 each coordinate Zn(2+). C11 and C44 form a disulfide bridge. The segment at K33 to K47 is contributes to redox-sensitivity. Residues Q86–S105 form a disordered region. Residues A94–S105 are compositionally biased toward low complexity.

The protein belongs to the zinc-associated anti-sigma factor (ZAS) superfamily. As to quaternary structure, interacts with cognate sigma factor SigR under reducing but not oxiding conditions. Treatment with the thiol-oxidzing agent diamide inhibits the interaction, while incubation with thioredoxin (trxA) stimulates the interaction. Requires Zn(2+) as cofactor. In terms of processing, under oxidizing conditions up to 3 disulfide bonds are formed. A single disulfide bond inhibits binding to SigR. Cys-11 forms a disulfide bond with either Cys-44 (the major bind) or Cys-41 (a minor bond).

A redox-regulated anti-sigma factor for extracytoplasmic function (ECF) sigma factor SigR, and a key sensor of disulfide stress. Holds SigR, its cognate ECF sigma factor, in an inactive form, inhibiting its sigma activity under reducing but not oxidizing conditions; oxidation and reduction of the anti-sigma factor is reversible. Mycothiol (MSH) is competent for reduction of RsrA, allowing it to bind to SigR. In conjunction with its cognate sigma factor SigR may sense the intracellular level of reduced MSH. Probably releases SigR during oxidative stress. This is Anti-sigma factor RsrA (rsrA) from Streptomyces coelicolor (strain ATCC BAA-471 / A3(2) / M145).